The primary structure comprises 1399 residues: DNA-directed RNA polymerase subunit beta' (1399 aa).

Residues cysteine 70, cysteine 72, cysteine 85, and cysteine 88 each coordinate Zn(2+). Mg(2+) is bound by residues aspartate 460, aspartate 462, and aspartate 464. Cysteine 814, cysteine 888, cysteine 895, and cysteine 898 together coordinate Zn(2+).

Belongs to the RNA polymerase beta' chain family. The RNAP catalytic core consists of 2 alpha, 1 beta, 1 beta' and 1 omega subunit. When a sigma factor is associated with the core the holoenzyme is formed, which can initiate transcription. Requires Mg(2+) as cofactor. It depends on Zn(2+) as a cofactor.

It carries out the reaction RNA(n) + a ribonucleoside 5'-triphosphate = RNA(n+1) + diphosphate. Functionally, DNA-dependent RNA polymerase catalyzes the transcription of DNA into RNA using the four ribonucleoside triphosphates as substrates. In Pseudomonas putida (strain ATCC 700007 / DSM 6899 / JCM 31910 / BCRC 17059 / LMG 24140 / F1), this protein is DNA-directed RNA polymerase subunit beta'.